The chain runs to 591 residues: L-fucose isomerase (591 aa).

Catalysis depends on proton acceptor residues Glu-337 and Asp-361. Positions 337, 361, and 528 each coordinate Mn(2+).

It belongs to the L-fucose isomerase family. As to quaternary structure, homohexamer. It depends on Mn(2+) as a cofactor.

The protein localises to the cytoplasm. The catalysed reaction is L-fucose = L-fuculose. The protein operates within carbohydrate degradation; L-fucose degradation; L-lactaldehyde and glycerone phosphate from L-fucose: step 1/3. In terms of biological role, converts the aldose L-fucose into the corresponding ketose L-fuculose. The chain is L-fucose isomerase from Salmonella typhi.